The following is a 325-amino-acid chain: Lipoyl synthase (325 aa).

The interval M1–P32 is disordered. Residues A19–P32 are compositionally biased toward basic and acidic residues. [4Fe-4S] cluster-binding residues include C66, C71, C77, C92, C96, C99, and S305. In terms of domain architecture, Radical SAM core spans W78–L294.

It belongs to the radical SAM superfamily. Lipoyl synthase family. It depends on [4Fe-4S] cluster as a cofactor.

The protein localises to the cytoplasm. The enzyme catalyses [[Fe-S] cluster scaffold protein carrying a second [4Fe-4S](2+) cluster] + N(6)-octanoyl-L-lysyl-[protein] + 2 oxidized [2Fe-2S]-[ferredoxin] + 2 S-adenosyl-L-methionine + 4 H(+) = [[Fe-S] cluster scaffold protein] + N(6)-[(R)-dihydrolipoyl]-L-lysyl-[protein] + 4 Fe(3+) + 2 hydrogen sulfide + 2 5'-deoxyadenosine + 2 L-methionine + 2 reduced [2Fe-2S]-[ferredoxin]. The protein operates within protein modification; protein lipoylation via endogenous pathway; protein N(6)-(lipoyl)lysine from octanoyl-[acyl-carrier-protein]: step 2/2. Functionally, catalyzes the radical-mediated insertion of two sulfur atoms into the C-6 and C-8 positions of the octanoyl moiety bound to the lipoyl domains of lipoate-dependent enzymes, thereby converting the octanoylated domains into lipoylated derivatives. The polypeptide is Lipoyl synthase (Beijerinckia indica subsp. indica (strain ATCC 9039 / DSM 1715 / NCIMB 8712)).